The chain runs to 115 residues: Nucleoid-associated protein P9211_00201 (115 aa).

Belongs to the YbaB/EbfC family. Homodimer.

It localises to the cytoplasm. Its subcellular location is the nucleoid. Functionally, binds to DNA and alters its conformation. May be involved in regulation of gene expression, nucleoid organization and DNA protection. The sequence is that of Nucleoid-associated protein P9211_00201 from Prochlorococcus marinus (strain MIT 9211).